A 178-amino-acid chain; its full sequence is Cytochrome b6-f complex iron-sulfur subunit (178 aa).

Residues 20-42 traverse the membrane as a helical segment; sequence LLTFGTATGVALGALYPVANYFM. In terms of domain architecture, Rieske spans 71-161; sequence NHPAGDRSLV…IDVEDDKVFV (91 aa). [2Fe-2S] cluster contacts are provided by Cys107, His109, Cys125, and His128. The cysteines at positions 112 and 127 are disulfide-linked.

Belongs to the Rieske iron-sulfur protein family. In terms of assembly, the 4 large subunits of the cytochrome b6-f complex are cytochrome b6, subunit IV (17 kDa polypeptide, PetD), cytochrome f and the Rieske protein, while the 4 small subunits are PetG, PetL, PetM and PetN. The complex functions as a dimer. The cofactor is [2Fe-2S] cluster.

The protein localises to the cellular thylakoid membrane. It carries out the reaction 2 oxidized [plastocyanin] + a plastoquinol + 2 H(+)(in) = 2 reduced [plastocyanin] + a plastoquinone + 4 H(+)(out). Component of the cytochrome b6-f complex, which mediates electron transfer between photosystem II (PSII) and photosystem I (PSI), cyclic electron flow around PSI, and state transitions. This chain is Cytochrome b6-f complex iron-sulfur subunit, found in Prochlorococcus marinus (strain MIT 9211).